Consider the following 624-residue polypeptide: Translocator protein BipB (624 aa).

A disordered region spans residues 54–99 (LASEQCDAQPVTDDARLDRLDDKPALRAPRSDAAHAADGNARGNGG). Positions 66 to 88 (DDARLDRLDDKPALRAPRSDAAH) are enriched in basic and acidic residues. Residues 313 to 343 (EMQAKREAELQKKSDEYQEQVKKAEEMQKTM) adopt a coiled-coil conformation. Transmembrane regions (helical) follow at residues 359–379 (FAAA…GLAL), 405–425 (AILK…LVAC), and 434–454 (LAGA…AAFV).

This sequence belongs to the SctE/SipB/YopB family.

The protein localises to the secreted. The protein resides in the host membrane. In terms of biological role, plays a role in the bacterium-induced formation of multinucleated giant cell (MNGC), which is formed after host cell fusion, as well as in the intercellular spreading of bacteria and in the induction of apoptosis in macrophages. May act in concert with other effector proteins to induce fusion of host cell membranes. The protein is Translocator protein BipB (bipB) of Burkholderia thailandensis (strain ATCC 700388 / DSM 13276 / CCUG 48851 / CIP 106301 / E264).